Here is a 381-residue protein sequence, read N- to C-terminus: 8-amino-7-oxononanoate synthase (381 aa).

A substrate-binding site is contributed by Arg27. 105–106 (GY) is a pyridoxal 5'-phosphate binding site. His130 contacts substrate. Pyridoxal 5'-phosphate contacts are provided by residues Ser176, 201 to 204 (DEAH), and 232 to 235 (TLSK). At Lys235 the chain carries N6-(pyridoxal phosphate)lysine. Thr345 provides a ligand contact to substrate.

This sequence belongs to the class-II pyridoxal-phosphate-dependent aminotransferase family. BioF subfamily. As to quaternary structure, homodimer. The cofactor is pyridoxal 5'-phosphate.

The catalysed reaction is 6-carboxyhexanoyl-[ACP] + L-alanine + H(+) = (8S)-8-amino-7-oxononanoate + holo-[ACP] + CO2. It functions in the pathway cofactor biosynthesis; biotin biosynthesis. Catalyzes the decarboxylative condensation of pimeloyl-[acyl-carrier protein] and L-alanine to produce 8-amino-7-oxononanoate (AON), [acyl-carrier protein], and carbon dioxide. This is 8-amino-7-oxononanoate synthase from Mycolicibacterium paratuberculosis (strain ATCC BAA-968 / K-10) (Mycobacterium paratuberculosis).